A 152-amino-acid polypeptide reads, in one-letter code: Large-conductance mechanosensitive channel (152 aa).

The next 2 membrane-spanning stretches (helical) occupy residues 14–34 (VIDLAIGVIIGGAFGKIVTSL) and 81–101 (GLFLNNLINFLIIAFSIFIAI).

Belongs to the MscL family. As to quaternary structure, homopentamer.

It is found in the cell membrane. Channel that opens in response to stretch forces in the membrane lipid bilayer. May participate in the regulation of osmotic pressure changes within the cell. The polypeptide is Large-conductance mechanosensitive channel (Clostridium perfringens (strain 13 / Type A)).